The sequence spans 598 residues: Nitrate/nitrite sensor protein NarX (598 aa).

The Cytoplasmic segment spans residues 1 to 14 (MLKRCLSPLTLVNQ). Residues 15-37 (VALIVLLSTAIGLAGMAVSGWLV) form a helical membrane-spanning segment. The Periplasmic segment spans residues 38 to 151 (QGVQGSAHAI…DRTTEMRIET (114 aa)). The helical transmembrane segment at 152 to 174 (VVLVHRVMAVFMALLLVFTIIWL) threads the bilayer. Residues 175-598 (RARLLQPWRQ…FTDVQGDTHE (424 aa)) lie on the Cytoplasmic side of the membrane. The HAMP domain occupies 176 to 228 (ARLLQPWRQLLAMASAVSHRDFTQRANISGRNEMAMLGTALNNMSAELAESYA). Positions 393–587 (TIARELHDSI…EVVVTFIPEK (195 aa)) constitute a Histidine kinase domain. Position 399 is a phosphohistidine; by autocatalysis (histidine 399).

Its subcellular location is the cell inner membrane. The catalysed reaction is ATP + protein L-histidine = ADP + protein N-phospho-L-histidine.. Acts as a sensor for nitrate/nitrite and transduces signal of nitrate availability to the NarL protein and of both nitrate/nitrite to the NarP protein. NarX probably activates NarL and NarP by phosphorylation in the presence of nitrate. NarX also plays a negative role in controlling NarL activity, probably through dephosphorylation in the absence of nitrate. The polypeptide is Nitrate/nitrite sensor protein NarX (narX) (Escherichia coli O157:H7).